The following is a 426-amino-acid chain: MSERFLVTGGNRLVGEVAVGGAKNSVLKLMAAALLAEGTTTITNCPDILDVPLMAEVLRGLGCEVTITDDAPGDRSVVTITTPAEPKYHADFPAVTQFRASVCVLGPLMARCKRAVVALPGGDAIGSRPLDMHQAGLRLLGATSEIEHGCVVARAEELRGARIRLDFPSVGATENILMAAVLAEGETVIDNAAREPDIVDLCNMLVQMGARISGAGTSVLTIQGVERLHPTEHRVIGDRIVAATWGIAAAMTMGDVRVTGVNPKHLALVLDKLRSAGARISFDVDGFRVVQPDRPRAVNFSTLPFPGFPTDLQPMAIGLAAIADGTSMITENIFEARFRFVEEMIRLGADARTDGHHAVVRGIPRLSSAPVWSSDIRAGAGLVLAGLVADGTTEVHDVFHIDRGYPNFVEQLQSLGGLVERVGGAE.

Phosphoenolpyruvate is bound at residue 23 to 24 (KN). A UDP-N-acetyl-alpha-D-glucosamine-binding site is contributed by arginine 99. Aspartate 123 (proton donor) is an active-site residue. Residues aspartate 311 and isoleucine 333 each contribute to the UDP-N-acetyl-alpha-D-glucosamine site.

This sequence belongs to the EPSP synthase family. MurA subfamily.

The protein resides in the cytoplasm. It carries out the reaction phosphoenolpyruvate + UDP-N-acetyl-alpha-D-glucosamine = UDP-N-acetyl-3-O-(1-carboxyvinyl)-alpha-D-glucosamine + phosphate. It functions in the pathway cell wall biogenesis; peptidoglycan biosynthesis. Its function is as follows. Cell wall formation. Adds enolpyruvyl to UDP-N-acetylglucosamine. The protein is UDP-N-acetylglucosamine 1-carboxyvinyltransferase of Nocardia farcinica (strain IFM 10152).